Consider the following 185-residue polypeptide: Ribosome-recycling factor (185 aa).

Positions 145 to 164 (DGEAGEDEVSRAEKDLDKTT) are disordered.

The protein belongs to the RRF family.

It localises to the cytoplasm. In terms of biological role, responsible for the release of ribosomes from messenger RNA at the termination of protein biosynthesis. May increase the efficiency of translation by recycling ribosomes from one round of translation to another. The protein is Ribosome-recycling factor of Mycobacterium sp. (strain JLS).